A 663-amino-acid polypeptide reads, in one-letter code: Alpha-1,4-glucan:maltose-1-phosphate maltosyltransferase (663 aa).

The interval 238–266 (IGETNRKGPDDAPEAGPDDPGSPWAIGGF) is disordered. Alpha-maltose 1-phosphate contacts are provided by Lys244, Gln309, and Asp344. Residue Asp380 is the Nucleophile of the active site. Asn381 contacts alpha-maltose 1-phosphate. Glu409 (proton donor) is an active-site residue. Residue 521-522 (KY) coordinates alpha-maltose 1-phosphate.

This sequence belongs to the glycosyl hydrolase 13 family. GlgE subfamily. In terms of assembly, homodimer.

The catalysed reaction is alpha-maltose 1-phosphate + [(1-&gt;4)-alpha-D-glucosyl](n) = [(1-&gt;4)-alpha-D-glucosyl](n+2) + phosphate. Maltosyltransferase that uses maltose 1-phosphate (M1P) as the sugar donor to elongate linear or branched alpha-(1-&gt;4)-glucans. Is involved in a branched alpha-glucan biosynthetic pathway from trehalose, together with TreS, Mak and GlgB. This Salinibacter ruber (strain DSM 13855 / M31) protein is Alpha-1,4-glucan:maltose-1-phosphate maltosyltransferase.